We begin with the raw amino-acid sequence, 156 residues long: Cyanate hydratase (156 aa).

Catalysis depends on residues arginine 96, glutamate 99, and serine 122.

It belongs to the cyanase family.

It carries out the reaction cyanate + hydrogencarbonate + 3 H(+) = NH4(+) + 2 CO2. In terms of biological role, catalyzes the reaction of cyanate with bicarbonate to produce ammonia and carbon dioxide. In Burkholderia lata (strain ATCC 17760 / DSM 23089 / LMG 22485 / NCIMB 9086 / R18194 / 383), this protein is Cyanate hydratase.